Reading from the N-terminus, the 150-residue chain is Endoribonuclease YbeY (150 aa).

The Zn(2+) site is built by His-108, His-112, and His-118.

The protein belongs to the endoribonuclease YbeY family. Requires Zn(2+) as cofactor.

It is found in the cytoplasm. Its function is as follows. Single strand-specific metallo-endoribonuclease involved in late-stage 70S ribosome quality control and in maturation of the 3' terminus of the 16S rRNA. In Methylococcus capsulatus (strain ATCC 33009 / NCIMB 11132 / Bath), this protein is Endoribonuclease YbeY.